A 350-amino-acid chain; its full sequence is Purine-binding protein BAB2_0673 (350 aa).

The first 17 residues, 1 to 17 (MVIATVAGFMLGGAAHA), serve as a signal peptide directing secretion. Trp-36, Trp-185, and Asp-211 together coordinate adenine.

It belongs to the BMP lipoprotein family.

In terms of biological role, binds adenine and probably also other purines, such as guanine. May play a role in adenine and guanine uptake. May be part of an ABC-type uptake system for adenine and similar ligands. In Brucella abortus (strain 2308), this protein is Purine-binding protein BAB2_0673.